Reading from the N-terminus, the 488-residue chain is Proline--tRNA ligase (488 aa).

This sequence belongs to the class-II aminoacyl-tRNA synthetase family. ProS type 3 subfamily. In terms of assembly, homodimer.

It localises to the cytoplasm. The catalysed reaction is tRNA(Pro) + L-proline + ATP = L-prolyl-tRNA(Pro) + AMP + diphosphate. Functionally, catalyzes the attachment of proline to tRNA(Pro) in a two-step reaction: proline is first activated by ATP to form Pro-AMP and then transferred to the acceptor end of tRNA(Pro). The protein is Proline--tRNA ligase of Pyrobaculum aerophilum (strain ATCC 51768 / DSM 7523 / JCM 9630 / CIP 104966 / NBRC 100827 / IM2).